The chain runs to 420 residues: Argininosuccinate synthase (420 aa).

11–19 (AFSGGLDTT) contacts ATP. An L-citrulline-binding site is contributed by Y88. An ATP-binding site is contributed by G118. Positions 120, 124, and 125 each coordinate L-aspartate. N124 is an L-citrulline binding site. R128, S174, S183, E257, and Y269 together coordinate L-citrulline. A disordered region spans residues 401-420 (KGAAVTDGSGDHAASEDTEE). Residues 409–420 (SGDHAASEDTEE) are compositionally biased toward basic and acidic residues.

This sequence belongs to the argininosuccinate synthase family. Type 1 subfamily. As to quaternary structure, homotetramer.

The protein localises to the cytoplasm. It carries out the reaction L-citrulline + L-aspartate + ATP = 2-(N(omega)-L-arginino)succinate + AMP + diphosphate + H(+). Its pathway is amino-acid biosynthesis; L-arginine biosynthesis; L-arginine from L-ornithine and carbamoyl phosphate: step 2/3. The protein is Argininosuccinate synthase of Haloarcula marismortui (strain ATCC 43049 / DSM 3752 / JCM 8966 / VKM B-1809) (Halobacterium marismortui).